The chain runs to 145 residues: Large ribosomal subunit protein uL16 (145 aa).

Over residues 1–17 (MLMPKRVKHRRVHRGRM) the composition is skewed to basic residues. A disordered region spans residues 1–22 (MLMPKRVKHRRVHRGRMTGKAT).

This sequence belongs to the universal ribosomal protein uL16 family. As to quaternary structure, part of the 50S ribosomal subunit.

Binds 23S rRNA and is also seen to make contacts with the A and possibly P site tRNAs. In Ruminiclostridium cellulolyticum (strain ATCC 35319 / DSM 5812 / JCM 6584 / H10) (Clostridium cellulolyticum), this protein is Large ribosomal subunit protein uL16.